The primary structure comprises 494 residues: WD repeat-containing protein 37 (494 aa).

2 stretches are compositionally biased toward polar residues: residues 1 to 13 and 22 to 31; these read MPTE…TARQ and SLSIRRTNSS. The interval 1–50 is disordered; the sequence is MPTESASCSTARQTKQKRKSHSLSIRRTNSSEQERTGLPRDMLEGQDSKL. The span at 32 to 47 shows a compositional bias: basic and acidic residues; that stretch reads EQERTGLPRDMLEGQD. 2 WD repeats span residues 154-194 and 197-236; these read GHRD…CLVK and GHVG…PTPQ. A disordered region spans residues 237 to 265; it reads PVADTSISGEDEVECSDKDEPDLDGDVSS. The segment covering 245–263 has biased composition (acidic residues); sequence GEDEVECSDKDEPDLDGDV. 5 WD repeats span residues 279-318, 321-360, 365-403, 406-445, and 452-493; these read SHQG…LVHS, GHDQ…IHSV, GHTD…SPIA, RTDS…LARL, and GHRR…LLQE.

Forms homodimers. Interacts with PACS1. Interacts with PACS2.

It is found in the cytoplasm. The protein resides in the nucleus. Required for normal ER Ca2+ handling in lymphocytes. Together with PACS1, it plays an essential role in stabilizing peripheral lymphocyte populations. This is WD repeat-containing protein 37 (WDR37) from Homo sapiens (Human).